The chain runs to 165 residues: Chorismate pyruvate-lyase (165 aa).

4 residues coordinate substrate: methionine 35, arginine 77, leucine 115, and glutamate 156.

It belongs to the UbiC family. As to quaternary structure, monomer.

It is found in the cytoplasm. It catalyses the reaction chorismate = 4-hydroxybenzoate + pyruvate. The protein operates within cofactor biosynthesis; ubiquinone biosynthesis. Functionally, removes the pyruvyl group from chorismate, with concomitant aromatization of the ring, to provide 4-hydroxybenzoate (4HB) for the ubiquinone pathway. This chain is Chorismate pyruvate-lyase, found in Escherichia coli O17:K52:H18 (strain UMN026 / ExPEC).